We begin with the raw amino-acid sequence, 156 residues long: Aspartate 1-decarboxylase (156 aa).

The active-site Schiff-base intermediate with substrate; via pyruvic acid is Ser29. Ser29 carries the post-translational modification Pyruvic acid (Ser). Residue Thr61 coordinates substrate. Residue Tyr62 is the Proton donor of the active site. Gly77–Ala79 serves as a coordination point for substrate.

Belongs to the PanD family. In terms of assembly, heterooctamer of four alpha and four beta subunits. Pyruvate is required as a cofactor. In terms of processing, is synthesized initially as an inactive proenzyme, which is activated by self-cleavage at a specific serine bond to produce a beta-subunit with a hydroxyl group at its C-terminus and an alpha-subunit with a pyruvoyl group at its N-terminus.

It localises to the cytoplasm. The enzyme catalyses L-aspartate + H(+) = beta-alanine + CO2. Its pathway is cofactor biosynthesis; (R)-pantothenate biosynthesis; beta-alanine from L-aspartate: step 1/1. In terms of biological role, catalyzes the pyruvoyl-dependent decarboxylation of aspartate to produce beta-alanine. This Rhodopirellula baltica (strain DSM 10527 / NCIMB 13988 / SH1) protein is Aspartate 1-decarboxylase.